The primary structure comprises 362 residues: Protein indeterminate-domain 16 (362 aa).

The disordered stretch occupies residues 1–22; that stretch reads MELTQPIRENGDPQGHQLTDPD. 2 consecutive C2H2-type zinc fingers follow at residues 39 to 61 and 82 to 112; these read YVCE…RRRH and YVCP…RRKH. Residues 118 to 142 form a CCHC-type 1; atypical zinc finger; the sequence is WVCERCSKGYAVQSDYKAHLKTCGS. The Zn(2+) site is built by cysteine 120, cysteine 123, histidine 136, cysteine 140, cysteine 147, cysteine 149, histidine 162, and cysteine 166. The CCHC-type 2; atypical zinc-finger motif lies at 145–168; sequence HSCDCGRVFSRVESFIEHQDTCTI. The segment at 155-167 is SHR-binding; sequence RVESFIEHQDTCT. Residues 247-278 form a disordered region; sequence SAQARHNEKRETSLTKERANEEARKAEETRQE. Over residues 251 to 278 the composition is skewed to basic and acidic residues; it reads RHNEKRETSLTKERANEEARKAEETRQE. Positions 252–319 form a coiled coil; the sequence is HNEKRETSLT…VREEAIKRIN (68 aa).

As to expression, highly expressed in leaves, hypocotyls, roots, vasculature of cotyledons, floral organs and in the endodermis and vasculaturenof inflorescence stems.

It localises to the nucleus. Its function is as follows. Transcription factor regulating lateral organ morphogenesis and gravitropic responses. Has a redundant role with IDD14 in directing leaf and floral organ morphogenesis. Acts cooperatively with IDD15 to control silique and branche orientation. Involved in the establishment of auxin gradients through the regulation of auxin biosynthesis and transport. The protein is Protein indeterminate-domain 16 of Arabidopsis thaliana (Mouse-ear cress).